Here is a 317-residue protein sequence, read N- to C-terminus: Acetyl-coenzyme A carboxylase carboxyl transferase subunit alpha (317 aa).

In terms of domain architecture, CoA carboxyltransferase C-terminal spans 39-293; the sequence is RLKKKSISLT…KTSLAQGVAE (255 aa).

This sequence belongs to the AccA family. Acetyl-CoA carboxylase is a heterohexamer composed of biotin carboxyl carrier protein (AccB), biotin carboxylase (AccC) and two subunits each of ACCase subunit alpha (AccA) and ACCase subunit beta (AccD).

The protein localises to the cytoplasm. The catalysed reaction is N(6)-carboxybiotinyl-L-lysyl-[protein] + acetyl-CoA = N(6)-biotinyl-L-lysyl-[protein] + malonyl-CoA. It functions in the pathway lipid metabolism; malonyl-CoA biosynthesis; malonyl-CoA from acetyl-CoA: step 1/1. Component of the acetyl coenzyme A carboxylase (ACC) complex. First, biotin carboxylase catalyzes the carboxylation of biotin on its carrier protein (BCCP) and then the CO(2) group is transferred by the carboxyltransferase to acetyl-CoA to form malonyl-CoA. The protein is Acetyl-coenzyme A carboxylase carboxyl transferase subunit alpha of Marinobacter nauticus (strain ATCC 700491 / DSM 11845 / VT8) (Marinobacter aquaeolei).